A 309-amino-acid chain; its full sequence is Olfactory receptor 6C4 (309 aa).

Residues 1–23 lie on the Extracellular side of the membrane; it reads MKNRTMFGEFILLGLTNQPELQV. N3 carries N-linked (GlcNAc...) asparagine glycosylation. A helical transmembrane segment spans residues 24-44; that stretch reads MIFIFLFLTYMLSILGNLTII. The Cytoplasmic portion of the chain corresponds to 45–52; the sequence is TLTLLDPH. A helical transmembrane segment spans residues 53 to 73; the sequence is LQTPMYFFLRNFSFLEISFTS. Over 74–97 the chain is Extracellular; sequence IFIPRFLTSMTTGNKVISFAGCLT. A disulfide bond links C95 and C187. A helical membrane pass occupies residues 98 to 118; it reads QYFFAIFLGATEFYLLASMSY. Residues 119 to 137 are Cytoplasmic-facing; sequence DRYVAICKPLHYLTIMSSR. Residues 138 to 158 traverse the membrane as a helical segment; the sequence is VCIQLVFCSWLGGFLAILPPI. Topologically, residues 159–195 are extracellular; that stretch reads ILMTQVDFCVSNILNHYYCDYGPLVELACSDTSLLEL. The helical transmembrane segment at 196–215 threads the bilayer; the sequence is MVILLAVVTLMVTLVLVTLS. Residues 216–235 are Cytoplasmic-facing; sequence YTYIIRTILRIPSAQQRTKA. The helical transmembrane segment at 236-256 threads the bilayer; that stretch reads FSTCSSHMIVISLSYGSCMFM. At 257 to 269 the chain is on the extracellular side; the sequence is YINPSAKEGGAFN. A helical transmembrane segment spans residues 270-290; it reads KGIAVLITSVTPLLNPFIYTL. Topologically, residues 291-309 are cytoplasmic; that stretch reads RNQQVKQAFKDSVKKIVKL.

Belongs to the G-protein coupled receptor 1 family.

The protein resides in the cell membrane. Functionally, odorant receptor. This is Olfactory receptor 6C4 (OR6C4) from Homo sapiens (Human).